We begin with the raw amino-acid sequence, 958 residues long: Collagen alpha-1(I) chain (958 aa).

The tract at residues 1 to 958 (GPMGPSGPRG…PGPPGPPGPP (958 aa)) is disordered. Over residues 50–64 (NGDDGEAGKPGRPGE) the composition is skewed to basic and acidic residues. Ser-92 is modified (phosphoserine). Low complexity-rich tracts occupy residues 100 to 116 (DAGP…PGEN) and 139 to 152 (PAGA…TGAA). Pro residues predominate over residues 154–166 (PPGPTGPAGPPGF). The segment covering 216 to 232 (APGIAGAPGFPGARGPS) has biased composition (low complexity). Over residues 294–303 (GERGGPGSRG) the composition is skewed to gly residues. Composition is skewed to low complexity over residues 304–335 (FPGS…PGEA), 347–373 (KGIT…QDGR), 382–401 (ARGQ…AGEP), 557–571 (SGPS…ARGA), 584–614 (AGFA…AGPA), 640–656 (SAGP…AGRV), 685–694 (ETGPAGRPGE), and 704–728 (AGEK…QGIA). Residue Ser-560 is modified to Phosphoserine. 2 stretches are compositionally biased toward pro residues: residues 769–779 (PPGPVGPPGIA) and 808–823 (AGPP…PGPV). The span at 859–873 (RGDKGETGEQGDRGI) shows a compositional bias: basic and acidic residues. Positions 892-925 (PGEQGPSGASGPAGPRGPPGSAGAPGKDGINGIP) are enriched in low complexity. Positions 943–958 (VGPPGPPGPPGPPGPP) are enriched in pro residues.

The protein belongs to the fibrillar collagen family. Trimers of one alpha 2(I) and two alpha 1(I) chains. In terms of processing, prolines at the third position of the tripeptide repeating unit (G-X-Y) are hydroxylated in some or all of the chains. In terms of tissue distribution, forms the fibrils of tendon, ligaments and bones. In bones, the fibrils are mineralized with calcium hydroxyapatite.

Its subcellular location is the secreted. It is found in the extracellular space. It localises to the extracellular matrix. Its function is as follows. Type I collagen is a member of group I collagen (fibrillar forming collagen). This is Collagen alpha-1(I) chain from Macrauchenia sp.